The sequence spans 103 residues: UPF0132 membrane protein AF_0105 (103 aa).

3 helical membrane passes run 5–25, 35–55, and 58–78; these read VAGA…LLME, AMQS…LSFI, and IGVL…LVCI.

This sequence belongs to the UPF0132 family.

It is found in the cell membrane. This chain is UPF0132 membrane protein AF_0105, found in Archaeoglobus fulgidus (strain ATCC 49558 / DSM 4304 / JCM 9628 / NBRC 100126 / VC-16).